We begin with the raw amino-acid sequence, 433 residues long: Enolase (433 aa).

Q167 provides a ligand contact to (2R)-2-phosphoglycerate. E209 (proton donor) is an active-site residue. Mg(2+) is bound by residues D246, E291, and D318. Positions 343, 372, 373, and 394 each coordinate (2R)-2-phosphoglycerate. The Proton acceptor role is filled by K343.

The protein belongs to the enolase family. As to quaternary structure, component of the RNA degradosome, a multiprotein complex involved in RNA processing and mRNA degradation. Mg(2+) is required as a cofactor.

It is found in the cytoplasm. The protein resides in the secreted. It localises to the cell surface. The enzyme catalyses (2R)-2-phosphoglycerate = phosphoenolpyruvate + H2O. The protein operates within carbohydrate degradation; glycolysis; pyruvate from D-glyceraldehyde 3-phosphate: step 4/5. Catalyzes the reversible conversion of 2-phosphoglycerate (2-PG) into phosphoenolpyruvate (PEP). It is essential for the degradation of carbohydrates via glycolysis. This is Enolase from Photobacterium profundum (strain SS9).